A 92-amino-acid polypeptide reads, in one-letter code: Small ribosomal subunit protein uS19 (92 aa).

The protein belongs to the universal ribosomal protein uS19 family.

In terms of biological role, protein S19 forms a complex with S13 that binds strongly to the 16S ribosomal RNA. The chain is Small ribosomal subunit protein uS19 from Chelativorans sp. (strain BNC1).